Here is a 125-residue protein sequence, read N- to C-terminus: Small ribosomal subunit protein bS6 (125 aa).

The interval 97–125 (TEASPMKAAKEERKPLAEVENNDFEDAEE) is disordered. A compositionally biased stretch (basic and acidic residues) spans 104–113 (AAKEERKPLA). Residues 116–125 (ENNDFEDAEE) show a composition bias toward acidic residues.

It belongs to the bacterial ribosomal protein bS6 family.

In terms of biological role, binds together with bS18 to 16S ribosomal RNA. This chain is Small ribosomal subunit protein bS6, found in Haemophilus influenzae (strain PittEE).